The sequence spans 295 residues: Protoheme IX farnesyltransferase (295 aa).

The next 9 helical transmembrane spans lie at Ile8–Ala28, Gly35–Phe55, Gly83–Gly103, Leu107–Leu127, Ile132–Ala152, Leu162–Phe182, Ile208–Ala228, Gly229–Arg249, and Val263–Gln283.

The protein belongs to the UbiA prenyltransferase family. Protoheme IX farnesyltransferase subfamily.

Its subcellular location is the cell inner membrane. The enzyme catalyses heme b + (2E,6E)-farnesyl diphosphate + H2O = Fe(II)-heme o + diphosphate. Its pathway is porphyrin-containing compound metabolism; heme O biosynthesis; heme O from protoheme: step 1/1. In terms of biological role, converts heme B (protoheme IX) to heme O by substitution of the vinyl group on carbon 2 of heme B porphyrin ring with a hydroxyethyl farnesyl side group. The sequence is that of Protoheme IX farnesyltransferase from Chromohalobacter salexigens (strain ATCC BAA-138 / DSM 3043 / CIP 106854 / NCIMB 13768 / 1H11).